The primary structure comprises 118 residues: Na(+)/H(+) antiporter subunit G1 (118 aa).

3 consecutive transmembrane segments (helical) span residues 9-29 (LAVI…IGII), 47-67 (LGAI…DGYI), and 69-89 (MQLI…SHLI).

The protein belongs to the CPA3 antiporters (TC 2.A.63) subunit G family. As to quaternary structure, may form a heterooligomeric complex that consists of seven subunits: mnhA1, mnhB1, mnhC1, mnhD1, mnhE1, mnhF1 and mnhG1.

The protein localises to the cell membrane. Its function is as follows. Mnh complex is a Na(+)/H(+) antiporter involved in Na(+) excretion. In Staphylococcus haemolyticus (strain JCSC1435), this protein is Na(+)/H(+) antiporter subunit G1 (mnhG1).